Here is a 101-residue protein sequence, read N- to C-terminus: Small ribosomal subunit protein uS14 (101 aa).

Belongs to the universal ribosomal protein uS14 family. Part of the 30S ribosomal subunit. Contacts proteins S3 and S10.

In terms of biological role, binds 16S rRNA, required for the assembly of 30S particles and may also be responsible for determining the conformation of the 16S rRNA at the A site. The polypeptide is Small ribosomal subunit protein uS14 (Chlamydia caviae (strain ATCC VR-813 / DSM 19441 / 03DC25 / GPIC) (Chlamydophila caviae)).